Reading from the N-terminus, the 311-residue chain is Ribonuclease HIII (311 aa).

Positions 95 to 311 (MSIVGSDEVG…NTEKAFRLLK (217 aa)) constitute an RNase H type-2 domain. The a divalent metal cation site is built by Asp101, Glu102, and Asp206.

Belongs to the RNase HII family. RnhC subfamily. Mn(2+) is required as a cofactor. Mg(2+) serves as cofactor.

The protein resides in the cytoplasm. The enzyme catalyses Endonucleolytic cleavage to 5'-phosphomonoester.. Endonuclease that specifically degrades the RNA of RNA-DNA hybrids. The polypeptide is Ribonuclease HIII (Bacillus cereus (strain 03BB102)).